Here is a 276-residue protein sequence, read N- to C-terminus: Ribonuclease 3 (276 aa).

The disordered stretch occupies residues 1–29 (MRGTVSVPKKAEDAKADPPAKKKADTQAS). Residues 9 to 25 (KKAEDAKADPPAKKKAD) are compositionally biased toward basic and acidic residues. In terms of domain architecture, RNase III spans 31-157 (HTLLEGRLGY…VIGAVYLDQG (127 aa)). A Mg(2+)-binding site is contributed by glutamate 70. Aspartate 74 is a catalytic residue. Residues aspartate 143 and glutamate 146 each contribute to the Mg(2+) site. Glutamate 146 is a catalytic residue. Residues 184-252 (DWKTSLQELT…AESAWRSIRA (69 aa)) form the DRBM domain. Positions 227-276 (YGTGTGRSKKEAEQQAAESAWRSIRAAADERAKATADAVDADPDEASASA) are disordered. Acidic residues predominate over residues 265–276 (VDADPDEASASA).

This sequence belongs to the ribonuclease III family. As to quaternary structure, homodimer. Requires Mg(2+) as cofactor.

It is found in the cytoplasm. It carries out the reaction Endonucleolytic cleavage to 5'-phosphomonoester.. Its function is as follows. Digests double-stranded RNA. Involved in the processing of primary rRNA transcript to yield the immediate precursors to the large and small rRNAs (23S and 16S). Also processes some mRNAs, and tRNAs when they are encoded in the rRNA operon. May modulate key aspects of gene expression as its absence has extensive effects on the abundance of about 200 different transcripts. Probably processes pre-crRNA and tracrRNA of type II CRISPR loci if present in the organism. The protein is Ribonuclease 3 (rnc) of Streptomyces coelicolor (strain ATCC BAA-471 / A3(2) / M145).